Consider the following 181-residue polypeptide: Alkyl hydroperoxide reductase AhpD (181 aa).

Cys131 serves as the catalytic Proton donor. Cysteines 131 and 134 form a disulfide. Cys134 (cysteine sulfenic acid (-SOH) intermediate) is an active-site residue.

The protein belongs to the AhpD family.

It carries out the reaction N(6)-[(R)-dihydrolipoyl]-L-lysyl-[lipoyl-carrier protein] + a hydroperoxide = N(6)-[(R)-lipoyl]-L-lysyl-[lipoyl-carrier protein] + an alcohol + H2O. Its function is as follows. Antioxidant protein with alkyl hydroperoxidase activity. Required for the reduction of the AhpC active site cysteine residues and for the regeneration of the AhpC enzyme activity. The protein is Alkyl hydroperoxide reductase AhpD of Bradyrhizobium sp. (strain ORS 278).